The chain runs to 343 residues: Methionine import ATP-binding protein MetN 1 (343 aa).

An ABC transporter domain is found at 2–241; it reads IKLSNITKVF…PKTPLAQKFI (240 aa). 38–45 is a binding site for ATP; that stretch reads GASGAGKS.

The protein belongs to the ABC transporter superfamily. Methionine importer (TC 3.A.1.24) family. The complex is composed of two ATP-binding proteins (MetN), two transmembrane proteins (MetI) and a solute-binding protein (MetQ).

It is found in the cell inner membrane. It catalyses the reaction L-methionine(out) + ATP + H2O = L-methionine(in) + ADP + phosphate + H(+). It carries out the reaction D-methionine(out) + ATP + H2O = D-methionine(in) + ADP + phosphate + H(+). Its function is as follows. Part of the ABC transporter complex MetNIQ involved in methionine import. Responsible for energy coupling to the transport system. This chain is Methionine import ATP-binding protein MetN 1, found in Salmonella typhimurium (strain LT2 / SGSC1412 / ATCC 700720).